The primary structure comprises 254 residues: Leucyl/phenylalanyl-tRNA--protein transferase (254 aa).

This sequence belongs to the L/F-transferase family.

The protein localises to the cytoplasm. It carries out the reaction N-terminal L-lysyl-[protein] + L-leucyl-tRNA(Leu) = N-terminal L-leucyl-L-lysyl-[protein] + tRNA(Leu) + H(+). The enzyme catalyses N-terminal L-arginyl-[protein] + L-leucyl-tRNA(Leu) = N-terminal L-leucyl-L-arginyl-[protein] + tRNA(Leu) + H(+). It catalyses the reaction L-phenylalanyl-tRNA(Phe) + an N-terminal L-alpha-aminoacyl-[protein] = an N-terminal L-phenylalanyl-L-alpha-aminoacyl-[protein] + tRNA(Phe). In terms of biological role, functions in the N-end rule pathway of protein degradation where it conjugates Leu, Phe and, less efficiently, Met from aminoacyl-tRNAs to the N-termini of proteins containing an N-terminal arginine or lysine. This is Leucyl/phenylalanyl-tRNA--protein transferase from Burkholderia cenocepacia (strain ATCC BAA-245 / DSM 16553 / LMG 16656 / NCTC 13227 / J2315 / CF5610) (Burkholderia cepacia (strain J2315)).